We begin with the raw amino-acid sequence, 100 residues long: Small ribosomal subunit protein uS14c (100 aa).

The protein belongs to the universal ribosomal protein uS14 family. In terms of assembly, part of the 30S ribosomal subunit.

The protein localises to the plastid. It is found in the chloroplast. In terms of biological role, binds 16S rRNA, required for the assembly of 30S particles. In Phalaenopsis aphrodite subsp. formosana (Moth orchid), this protein is Small ribosomal subunit protein uS14c.